The following is a 189-amino-acid chain: MIESNESYSYGGDTIEPLGTLSGFDLVRRALEEARAAACAQGKDAGRGHVVPPVPFRVTDRRRNWSGPGPDVRDPQPLGKVAHDLAKKRGWSAQVAEGRVFGQWASMVGGQIADHAFPVGLNNGVLSVTAESTAWATQLRIMQAQLLAKIAAAVGNGVVTSLKITGPTAPSWRKGPWHIAGRGPRDTYG.

The tract at residues 59–78 is disordered; that stretch reads TDRRRNWSGPGPDVRDPQPL.

The protein belongs to the UPF0232 family.

The protein is UPF0232 protein MLBr00004 of Mycobacterium leprae (strain Br4923).